The sequence spans 205 residues: uncharacterized protein (205 aa).

A signal peptide spans 1 to 40 (MSAGKSYRKKMKQRRMNMKISKYALGILMLSLVFVLSACG). Residues 44–82 (STKESTHDNHSDSSTHEEMDHSGSADVPEGLQESKNPKY) are disordered. Residues 47 to 66 (ESTHDNHSDSSTHEEMDHSG) are compositionally biased toward basic and acidic residues.

This is an uncharacterized protein from Bacillus subtilis (strain 168).